The primary structure comprises 307 residues: Atrochrysone carboxyl ACP thioesterase (307 aa).

Positions 104, 106, 108, and 109 each coordinate Zn(2+). Catalysis depends on Asp-108, which acts as the Proton donor/acceptor.

The protein belongs to the metallo-beta-lactamase superfamily. Requires Zn(2+) as cofactor.

The catalysed reaction is atrochrysone carboxyl-[ACP] + H2O = atrochrysone carboxylate + holo-[ACP] + H(+). It functions in the pathway secondary metabolite biosynthesis. Atrochrysone carboxyl ACP thioesterase; part of the gene cluster that mediates the biosynthesis of monodictyphenone, a prenyl xanthone derivative. The pathway begins with the synthesis of atrochrysone thioester by the polyketide synthase (PKS) mdpG. The atrochrysone carboxyl ACP thioesterase mdpF then breaks the thioester bond and releases the atrochrysone carboxylic acid from mdpG. The atrochrysone carboxylic acid is then converted to atrochrysone which is further transformed into emodin anthrone. The next step is performed by the anthrone oxygenase mdpH that catalyzes the oxidation of emodinanthrone to emodin. Emodin is further modified to yield monodictyphenone via several steps involving mdpB, mdpC mdpJ, mdpK and mdpL. The short chain dehydrogenase mdpC converts the tautomers of emodin hydroquinone into the 3-hydroxy-3,4-dihydroan-thracen-1(2H)-one derivative. These enzymes with xptA, xptB and xptC are also proposed to be involved in the synthesis of shamixanthone from emodin. Especially, direct reduction of emodin by the short chain dehydrogenase mdpC followed by dehydration catalyzed by the scytalone dehydratase-like protein mdpB gives loss of oxygen and formation of chrysophanol intermediate in two simple steps. The protein is Atrochrysone carboxyl ACP thioesterase of Emericella nidulans (strain FGSC A4 / ATCC 38163 / CBS 112.46 / NRRL 194 / M139) (Aspergillus nidulans).